A 183-amino-acid polypeptide reads, in one-letter code: Glutamyl-tRNA(Gln) amidotransferase subunit F, mitochondrial (183 aa).

The N-terminal 23 residues, 1–23, are a transit peptide targeting the mitochondrion; sequence MSRMLNQIPRLITRSFRTSSVGY.

It belongs to the GatF family. Subunit of the heterotrimeric GatFAB amidotransferase (AdT) complex, composed of A, B and F subunits.

It localises to the mitochondrion inner membrane. The catalysed reaction is L-glutamyl-tRNA(Gln) + L-glutamine + ATP + H2O = L-glutaminyl-tRNA(Gln) + L-glutamate + ADP + phosphate + H(+). Its function is as follows. Allows the formation of correctly charged Gln-tRNA(Gln) through the transamidation of misacylated Glu-tRNA(Gln) in the mitochondria. The reaction takes place in the presence of glutamine and ATP through an activated gamma-phospho-Glu-tRNA(Gln). Required for proper protein synthesis within the mitochondrion. This Debaryomyces hansenii (strain ATCC 36239 / CBS 767 / BCRC 21394 / JCM 1990 / NBRC 0083 / IGC 2968) (Yeast) protein is Glutamyl-tRNA(Gln) amidotransferase subunit F, mitochondrial.